The chain runs to 493 residues: Cysteine--tRNA ligase (493 aa).

A Zn(2+)-binding site is contributed by C29. The 'HIGH' region motif lies at P31 to N41. C227, H252, and E256 together coordinate Zn(2+). A 'KMSKS' region motif is present at residues K285–S289. K288 contributes to the ATP binding site.

This sequence belongs to the class-I aminoacyl-tRNA synthetase family. As to quaternary structure, monomer. It depends on Zn(2+) as a cofactor.

The protein localises to the cytoplasm. The catalysed reaction is tRNA(Cys) + L-cysteine + ATP = L-cysteinyl-tRNA(Cys) + AMP + diphosphate. This Rhodopseudomonas palustris (strain HaA2) protein is Cysteine--tRNA ligase.